The chain runs to 157 residues: Phosphopantetheine adenylyltransferase (157 aa).

T8 lines the substrate pocket. Residues 8-9 and H16 contribute to the ATP site; that span reads TF. Substrate is bound by residues K40, T72, and R86. Residues 87-89, E97, and 122-128 each bind ATP; these read GLR and YSFLSSS.

It belongs to the bacterial CoaD family. In terms of assembly, homohexamer. The cofactor is Mg(2+).

Its subcellular location is the cytoplasm. It carries out the reaction (R)-4'-phosphopantetheine + ATP + H(+) = 3'-dephospho-CoA + diphosphate. The protein operates within cofactor biosynthesis; coenzyme A biosynthesis; CoA from (R)-pantothenate: step 4/5. In terms of biological role, reversibly transfers an adenylyl group from ATP to 4'-phosphopantetheine, yielding dephospho-CoA (dPCoA) and pyrophosphate. The chain is Phosphopantetheine adenylyltransferase from Prochlorococcus marinus (strain AS9601).